The chain runs to 150 residues: Anthranilate synthase component 1 (150 aa).

Ser40 is a binding site for L-tryptophan. A chorismate-binding site is contributed by Arg119.

Belongs to the anthranilate synthase component I family. Heterotetramer consisting of two non-identical subunits: a beta subunit (TrpG) and a large alpha subunit (TrpE). Mg(2+) is required as a cofactor.

It carries out the reaction chorismate + L-glutamine = anthranilate + pyruvate + L-glutamate + H(+). Its pathway is amino-acid biosynthesis; L-tryptophan biosynthesis; L-tryptophan from chorismate: step 1/5. Its activity is regulated as follows. Feedback inhibited by tryptophan. In terms of biological role, part of a heterotetrameric complex that catalyzes the two-step biosynthesis of anthranilate, an intermediate in the biosynthesis of L-tryptophan. In the first step, the glutamine-binding beta subunit (TrpG) of anthranilate synthase (AS) provides the glutamine amidotransferase activity which generates ammonia as a substrate that, along with chorismate, is used in the second step, catalyzed by the large alpha subunit of AS (TrpE) to produce anthranilate. In the absence of TrpG, TrpE can synthesize anthranilate directly from chorismate and high concentrations of ammonia. This is Anthranilate synthase component 1 (trpE) from Citrobacter freundii.